The sequence spans 548 residues: Stretch-activated cation channel MID1 (548 aa).

The N-terminal stretch at 1–20 (MIVWQALFVVYCLFTTSIHG) is a signal peptide. Residues 21 to 341 (LFQDFNPFAN…YLTKKISNGD (321 aa)) lie on the Extracellular side of the membrane. N-linked (GlcNAc...) asparagine glycans are attached at residues Asn32, Asn70, Asn112, Asn125, Asn159, Asn175, Asn228, Asn238, Asn265, Asn282, Asn285, Asn291, and Asn324. Residues 342-358 (GLSSVGGILFSHVYFTT) traverse the membrane as a helical segment. Residues 359 to 548 (RSTDVCSLIF…LMVIHPLDDT (190 aa)) lie on the Cytoplasmic side of the membrane.

As to quaternary structure, forms an oligomer with a molecular mass of 200 kDa by disulfide bonds. Interacts with CCH1 to form a Ca(2+) influx channel. In terms of processing, N-glycosylated.

Its subcellular location is the cell membrane. Calcium-permeable, cation-selective stretch-activated channel (SAC) that functions together with CCH1 to mediate calcium entry into cells. Required during mating. Together with CCH1, essential for tolerance to iron stress, which leads to an increased oxidative poise, and to cold stress. This is Stretch-activated cation channel MID1 (MID1) from Saccharomyces cerevisiae (strain ATCC 204508 / S288c) (Baker's yeast).